The sequence spans 685 residues: Protein argonaute (685 aa).

The interval 1-99 is N-terminal domain; that stretch reads MNHLGKTEVF…LYPKGRRPLD (99 aa). Residues 100–176 are linker L1; it reads PKDPGERSVL…VDPAYRILCE (77 aa). One can recognise a PAZ domain in the interval 169–265; it reads PAYRILCEMS…HLTGLLVPVL (97 aa). Positions 272–337 are linker L2; it reads EEEGSLALSL…SKPADALRVG (66 aa). The mid domain stretch occupies residues 338-463; it reads FYRAQETALA…LLAKAGLQVV (126 aa). Positions 464 to 685 are PIWI domain; sequence ALSGAYPAEL…EVDREKLFFV (222 aa). Residues Asp-478, Glu-512, Asp-546, and Asp-660 contribute to the active site. Asp-478 serves as a coordination point for Mn(2+). Positions 507–671 constitute a Piwi domain; that stretch reads EAQAGERIPQ…LVKEVGRLGI (165 aa). Residues Asp-546, Asp-660, and Val-685 each contribute to the Mn(2+) site.

This sequence belongs to the argonaute family. Long pAgo subfamily. As to quaternary structure, coimmunoprecipitates with a number of proteins involved in DNA replication or recombination including RepA (initiates replication), AddA/B (TT_C0638 and TT_C0639), ArgR, GyrA/B, HU (TT_C0984), PriA, Rad52 (TT_C1923), RecJ, SSB, TopA and UvrB. Most proteins remain associated with TtAgo after DNase treatment and associate with catalytically inactive protein. Mn(2+) serves as cofactor.

In terms of biological role, a DNA-guided ssDNA endonuclease. Uses short ssDNA sequences as guides (gDNA, also called small interfering DNA, siDNA) to bind complementary DNA target strands, resulting in cleavage of the target DNA (tDNA). The cleavage site is 10 nucleotides (nt) downstream of the target residue base-paired with the 5'-end of the gDNA. Plays a role in completion of DNA replication, participates in decatenating replicated DNA and plasmid. In situ purifies with 5'-phosphorylated long DNA (about 1160 nt, maps to the whole chromosome and plasmid), 25-35 nt RNAs that map to the whole chromosome and 15-18 nt DNA that maps to the replication terminus region (ter) on the chromosome and plasmid. Most short DNA starts with dC. Has been shown to have guide sequence-independent dsDNase activity called 'chopping', which requires unstable DNA (high AT-content, multiple mismatches or low salt conditions), and could be used to generate gDNA. Preferentially binds tDNA with dC at its 3'-terminus. Has also been shown to have no detectable guide sequence-independent dsDNase activity. The latter study proposes TtAgo may acquire gDNA from nicked dsDNA, by binding to 5'-phosphorylated-dC nicks, then cleaving 10 nt away on the opposite strand; subsequently an exonuclease (maybe AddA-AddB helicase/nuclease) trims the ends to generate the gDNA. Functionally, involved in defense against invading mobile genetic elements. TtAgo interferes with plasmid DNA, stimulates expression of specific endogenous genes, including various CRISPR loci and at least part of the CRISPR adaptation machinery, but only when exogenous plasmid DNA is present. Upon purification from E.coli associates with gDNA 13-25 nt long with 5'-phosphorylated ends and with 10-150 nt RNA with 5'-OH. DNA corresponds to the expression plasmid rather than chromosomal DNA; 89% of gDNA starts with dC and 72% has dA in the second position. Endonucleolytically cleaves tDNA with 5'-phosphorylated gDNA but not 5'-phosphorylated gRNA; the active site is involved in processing or binding of ssDNA. Nicks or linearizes supercoiled plasmid target when it has the appropriate gDNA sequences, does not cleave linear tDNA. Positions 4 to 16 of the tDNA need to be base paired to the gDNA for efficient tDNA cleavage. Although the system can support single nucleotide insertions in either the gDNA or tDNA, in all cases cleavage activity is reduced, with a wide range of sequence- and position-specific effects. First characterized as a DNA-guided RNA endonuclease. Uses gDNA to bind complementary RNA target strands, resulting in cleavage of the target RNA. The cleavage site is 10 nucleotides (nt) downstream of the target residue base-paired with the 5'-end of the guide DNA. The chain is Protein argonaute from Thermus thermophilus (strain ATCC BAA-163 / DSM 7039 / HB27).